A 173-amino-acid polypeptide reads, in one-letter code: Protein MOTHER of FT and TFL1 (173 aa).

A2 carries the N-acetylalanine modification.

The protein belongs to the phosphatidylethanolamine-binding protein family. Expressed in gametophytes and developing seeds.

It localises to the cytoplasm. May form complexes with phosphorylated ligands by interfering with kinases and their effectors. Regulates seed germination via the abscisic acid (ABA) and gibberellic acid (GA)signaling pathways. During seed germination, MFT expression is directly repressed by ABI3 or promoted by ABI5 in the ABA signaling pathway. Involved in a negative feedback regulation of ABA signaling. Promotes embryo growth by direct repression of ABI5. In the GA signaling pathway, MFT expression is promoted by the DELLA protein RGL2 during seed germination. May regulate seed germination and fertility through the brassinosteroid (BR) signaling pathway. The protein is Protein MOTHER of FT and TFL1 (MFT) of Arabidopsis thaliana (Mouse-ear cress).